Reading from the N-terminus, the 317-residue chain is Acetyl-coenzyme A carboxylase carboxyl transferase subunit alpha (317 aa).

The CoA carboxyltransferase C-terminal domain occupies 39-293; that stretch reads KLEGKAQEAL…GNAIAEAMGS (255 aa).

It belongs to the AccA family. Acetyl-CoA carboxylase is a heterohexamer composed of biotin carboxyl carrier protein (AccB), biotin carboxylase (AccC) and two subunits each of ACCase subunit alpha (AccA) and ACCase subunit beta (AccD).

It is found in the cytoplasm. The catalysed reaction is N(6)-carboxybiotinyl-L-lysyl-[protein] + acetyl-CoA = N(6)-biotinyl-L-lysyl-[protein] + malonyl-CoA. The protein operates within lipid metabolism; malonyl-CoA biosynthesis; malonyl-CoA from acetyl-CoA: step 1/1. Functionally, component of the acetyl coenzyme A carboxylase (ACC) complex. First, biotin carboxylase catalyzes the carboxylation of biotin on its carrier protein (BCCP) and then the CO(2) group is transferred by the carboxyltransferase to acetyl-CoA to form malonyl-CoA. The sequence is that of Acetyl-coenzyme A carboxylase carboxyl transferase subunit alpha from Azorhizobium caulinodans (strain ATCC 43989 / DSM 5975 / JCM 20966 / LMG 6465 / NBRC 14845 / NCIMB 13405 / ORS 571).